The sequence spans 74 residues: ATP synthase subunit 9, mitochondrial (74 aa).

2 helical membrane passes run 8 to 28 (IGAG…GNVF) and 50 to 70 (ILGF…AFLI).

It belongs to the ATPase C chain family. As to quaternary structure, F-type ATPases have 2 components, CF(1) - the catalytic core - and CF(0) - the membrane proton channel. CF(1) has five subunits: alpha(3), beta(3), gamma(1), delta(1), epsilon(1). CF(0) has three main subunits: a, b and c.

The protein localises to the mitochondrion membrane. Its function is as follows. This protein is one of the chains of the nonenzymatic membrane component (F0) of mitochondrial ATPase. The sequence is that of ATP synthase subunit 9, mitochondrial (ATP9) from Brassica napus (Rape).